Reading from the N-terminus, the 171-residue chain is UPF0312 protein SAOUHSC_03022 (171 aa).

It belongs to the UPF0312 family.

This Staphylococcus aureus (strain NCTC 8325 / PS 47) protein is UPF0312 protein SAOUHSC_03022.